We begin with the raw amino-acid sequence, 493 residues long: Arginine decarboxylase (493 aa).

Lys-229 carries the N6-(pyridoxal phosphate)lysine modification.

The protein belongs to the Orn/Lys/Arg decarboxylase class-I family. Pyridoxal 5'-phosphate is required as a cofactor.

It is found in the cytoplasm. It carries out the reaction L-arginine + H(+) = agmatine + CO2. The protein operates within amine and polyamine biosynthesis; agmatine biosynthesis; agmatine from L-arginine: step 1/1. Its function is as follows. Catalyzes the formation of agmatine from arginine. The sequence is that of Arginine decarboxylase (speA) from Bacillus anthracis.